A 489-amino-acid chain; its full sequence is Rhamnulokinase (489 aa).

13–17 lines the ATP pocket; sequence ASSGR. C68 and C222 are oxidised to a cystine. Residues G83 and 236 to 238 contribute to the substrate site; that span reads HDT. Catalysis depends on D237, which acts as the Proton acceptor. T259 contacts ATP. N296 contributes to the substrate binding site. Q304 lines the ATP pocket. C353 and C370 are oxidised to a cystine. G402 contacts ATP. The cysteines at positions 413 and 417 are disulfide-linked.

The protein belongs to the rhamnulokinase family. In terms of assembly, monomer. It depends on Mg(2+) as a cofactor.

The enzyme catalyses L-rhamnulose + ATP = L-rhamnulose 1-phosphate + ADP + H(+). It functions in the pathway carbohydrate degradation; L-rhamnose degradation; glycerone phosphate from L-rhamnose: step 2/3. Its function is as follows. Involved in the catabolism of L-rhamnose (6-deoxy-L-mannose). Catalyzes the transfer of the gamma-phosphate group from ATP to the 1-hydroxyl group of L-rhamnulose to yield L-rhamnulose 1-phosphate. The sequence is that of Rhamnulokinase from Escherichia coli (strain K12 / DH10B).